Here is a 336-residue protein sequence, read N- to C-terminus: Pyridoxal 5'-phosphate synthase subunit PdxS (336 aa).

Aspartate 62 contacts D-ribose 5-phosphate. Lysine 119 serves as the catalytic Schiff-base intermediate with D-ribose 5-phosphate. Glycine 191 lines the D-ribose 5-phosphate pocket. Lysine 203 contacts D-glyceraldehyde 3-phosphate. Residues glycine 254 and 275-276 (GS) each bind D-ribose 5-phosphate.

Belongs to the PdxS/SNZ family. As to quaternary structure, in the presence of PdxT, forms a dodecamer of heterodimers.

It carries out the reaction aldehydo-D-ribose 5-phosphate + D-glyceraldehyde 3-phosphate + L-glutamine = pyridoxal 5'-phosphate + L-glutamate + phosphate + 3 H2O + H(+). Its pathway is cofactor biosynthesis; pyridoxal 5'-phosphate biosynthesis. Catalyzes the formation of pyridoxal 5'-phosphate from ribose 5-phosphate (RBP), glyceraldehyde 3-phosphate (G3P) and ammonia. The ammonia is provided by the PdxT subunit. Can also use ribulose 5-phosphate and dihydroxyacetone phosphate as substrates, resulting from enzyme-catalyzed isomerization of RBP and G3P, respectively. The polypeptide is Pyridoxal 5'-phosphate synthase subunit PdxS (Pyrobaculum calidifontis (strain DSM 21063 / JCM 11548 / VA1)).